The sequence spans 331 residues: Decarboxylase orsB (331 aa).

H11, H157, and D284 together coordinate Zn(2+).

Belongs to the metallo-dependent hydrolases superfamily. ACMSD family.

Its pathway is secondary metabolite biosynthesis. Decarboxylase; part of the gene cluster that mediates the biosynthesis of orsellinic acid, as well as of the cathepsin K inhibitors F9775 A and F9775 B. The non-reducing polyketide synthase orsA produces orsellinic acid by condensing acetyl-CoA with 3 malonyl-CoA units. Further modifications by the decarboxylase orsB and the tyrosinase-like protein orsC lead to the production of F9775 A and F9775 B. The functions of orsD and orsE remain unclear since only orsB and orsC are required to convert orsellinic acid into F9775 A and F9775 B. This Emericella nidulans (strain FGSC A4 / ATCC 38163 / CBS 112.46 / NRRL 194 / M139) (Aspergillus nidulans) protein is Decarboxylase orsB.